The sequence spans 464 residues: uncharacterized protein (464 aa).

Residues 13 to 71 (MLKVSDIIQIKIDKIVFGGEGLGYYNGFAVFVPMSIPEDELEIEIISIKKTYARGLIKN) enclose the TRAM domain. S-adenosyl-L-methionine is bound by residues Gln-295, Tyr-324, Glu-345, and Asp-393. The active-site Nucleophile is Cys-420.

It belongs to the class I-like SAM-binding methyltransferase superfamily. RNA M5U methyltransferase family.

This is an uncharacterized protein from Fusobacterium nucleatum subsp. nucleatum (strain ATCC 25586 / DSM 15643 / BCRC 10681 / CIP 101130 / JCM 8532 / KCTC 2640 / LMG 13131 / VPI 4355).